Consider the following 344-residue polypeptide: Acetylpolyamine amidohydrolase 2 (344 aa).

The active-site Proton donor/acceptor is His-159. The Zn(2+) site is built by Asp-195, His-197, and Asp-284.

This sequence belongs to the histone deacetylase family. Homodimer. Zn(2+) serves as cofactor.

It carries out the reaction N-acetylputrescine + H2O = putrescine + acetate. The catalysed reaction is N-acetylcadaverine + H2O = cadaverine + acetate. Its pathway is amine and polyamine metabolism. Its function is as follows. Catalyzes the deacetylation of acetylated polyamines such as N-acetylputrescine and N-acetylcadaverine. Plays an important role in the metabolism of acetylated polyamines in P.aeruginosa. Is involved in the degradation pathways of N-acetylputrescine and N-acetylcadaverine, that allow P.aeruginosa to utilize these acetylpolyamines as a carbon source under glucose starvation. Shows nearly no activity against N(1)-acetylspermine and N(1)-acetylspermidine. Can also hydrolyze artificial trifluoroacetylated lysine-derivative, and to a lesser extent, acetylated lysine-derivative. The sequence is that of Acetylpolyamine amidohydrolase 2 from Pseudomonas aeruginosa (strain ATCC 15692 / DSM 22644 / CIP 104116 / JCM 14847 / LMG 12228 / 1C / PRS 101 / PAO1).